Here is a 318-residue protein sequence, read N- to C-terminus: Ribosomal RNA small subunit methyltransferase H (318 aa).

Residues glycine 33–histidine 35, aspartate 53, phenylalanine 80, aspartate 101, and glutamine 108 contribute to the S-adenosyl-L-methionine site.

The protein belongs to the methyltransferase superfamily. RsmH family.

It is found in the cytoplasm. It carries out the reaction cytidine(1402) in 16S rRNA + S-adenosyl-L-methionine = N(4)-methylcytidine(1402) in 16S rRNA + S-adenosyl-L-homocysteine + H(+). Functionally, specifically methylates the N4 position of cytidine in position 1402 (C1402) of 16S rRNA. In Symbiobacterium thermophilum (strain DSM 24528 / JCM 14929 / IAM 14863 / T), this protein is Ribosomal RNA small subunit methyltransferase H.